Reading from the N-terminus, the 161-residue chain is Allophycocyanin subunit alpha 1 (161 aa).

N4-methylasparagine is present on Asn-71. Cys-81 provides a ligand contact to (2R,3E)-phycocyanobilin.

It belongs to the phycobiliprotein family. As to quaternary structure, heterohexamer of two alpha chains, one alpha-B chain and three beta chains. Post-translationally, contains one covalently linked phycocyanobilin chromophore. The chromophore is added by phycocyanobilin lyase CpcS 1.

Its subcellular location is the cellular thylakoid membrane. In terms of biological role, light-harvesting photosynthetic bile pigment-protein from the phycobiliprotein complex. Allophycocyanin has a maximum absorption at approximately 650 to 653 nanometers. This is Allophycocyanin subunit alpha 1 (apcA1) from Nostoc sp. (strain PCC 7120 / SAG 25.82 / UTEX 2576).